The primary structure comprises 238 residues: Probable transcriptional regulatory protein LACR_0237 (238 aa).

This sequence belongs to the TACO1 family. YeeN subfamily.

It localises to the cytoplasm. This chain is Probable transcriptional regulatory protein LACR_0237, found in Lactococcus lactis subsp. cremoris (strain SK11).